The sequence spans 299 residues: Ribosomal protein L11 methyltransferase (299 aa).

4 residues coordinate S-adenosyl-L-methionine: Thr149, Gly170, Asp192, and Asn234.

This sequence belongs to the methyltransferase superfamily. PrmA family.

It localises to the cytoplasm. It catalyses the reaction L-lysyl-[protein] + 3 S-adenosyl-L-methionine = N(6),N(6),N(6)-trimethyl-L-lysyl-[protein] + 3 S-adenosyl-L-homocysteine + 3 H(+). Its function is as follows. Methylates ribosomal protein L11. This chain is Ribosomal protein L11 methyltransferase, found in Chromohalobacter salexigens (strain ATCC BAA-138 / DSM 3043 / CIP 106854 / NCIMB 13768 / 1H11).